The sequence spans 380 residues: Histidinol-phosphate aminotransferase (380 aa).

Lys232 bears the N6-(pyridoxal phosphate)lysine mark.

Belongs to the class-II pyridoxal-phosphate-dependent aminotransferase family. Histidinol-phosphate aminotransferase subfamily. In terms of assembly, homodimer. The cofactor is pyridoxal 5'-phosphate.

The catalysed reaction is L-histidinol phosphate + 2-oxoglutarate = 3-(imidazol-4-yl)-2-oxopropyl phosphate + L-glutamate. The protein operates within amino-acid biosynthesis; L-histidine biosynthesis; L-histidine from 5-phospho-alpha-D-ribose 1-diphosphate: step 7/9. In Mycobacterium bovis (strain BCG / Pasteur 1173P2), this protein is Histidinol-phosphate aminotransferase.